A 523-amino-acid chain; its full sequence is Tryptophan 6-halogenase SttH (523 aa).

The FAD site is built by G14, S40, I43, V46, V48, and A51. K79 is an active-site residue. P97 provides a ligand contact to L-tryptophan. 2 residues coordinate FAD: V203 and L354. Chloride contacts are provided by T365 and G366. I367 lines the FAD pocket. Y456 and Y457 together coordinate L-tryptophan.

This sequence belongs to the flavin-dependent halogenase family. Bacterial tryptophan halogenase subfamily. Homodimer.

It catalyses the reaction L-tryptophan + FADH2 + chloride + O2 = 6-chloro-L-tryptophan + FAD + 2 H2O. The enzyme catalyses D-tryptophan + FADH2 + chloride + O2 = 6-chloro-D-tryptophan + FAD + 2 H2O. Catalyzes the chlorination of tryptophan (Trp) at C6 position to yield 6-chloro-tryptophan. Accepts both L and D-Trp as the substrates. The enzyme also uses bromide to yield 6-bromo-Trp. In vitro, can also catalyze the halogenation of 3-indolepropionic acid, N-methyltryptophan and non-indolic aromatic substrates such as kynurenine, anthranilamide and N-phenylanthranilic acid. In Streptomyces toxytricini (Actinomyces toxytricini), this protein is Tryptophan 6-halogenase SttH.